A 317-amino-acid chain; its full sequence is Putative HTH-type transcriptional regulatory protein NP_1320A (317 aa).

One can recognise an HTH cro/C1-type domain in the interval Leu132–Leu189. Positions Leu143 to Asp162 form a DNA-binding region, H-T-H motif.

The chain is Putative HTH-type transcriptional regulatory protein NP_1320A from Natronomonas pharaonis (strain ATCC 35678 / DSM 2160 / CIP 103997 / JCM 8858 / NBRC 14720 / NCIMB 2260 / Gabara) (Halobacterium pharaonis).